We begin with the raw amino-acid sequence, 333 residues long: Olfactory receptor 1078 (333 aa).

The Extracellular portion of the chain corresponds to 1–25; it reads MDSSNRTRVSEFLLLGFVENKDLQP. Asn5 carries an N-linked (GlcNAc...) asparagine glycan. The helical transmembrane segment at 26 to 50 threads the bilayer; the sequence is LIYGLFLSMYLVTVIGNISIIVAII. At 51–57 the chain is on the cytoplasmic side; the sequence is SDPCLHT. Residues 58 to 79 form a helical membrane-spanning segment; it reads PMYFFLSNLSFVDICFISTTVP. Residues 80 to 100 lie on the Extracellular side of the membrane; sequence KMLVNIQTQNNVITYAGCITQ. A disulfide bond links Cys97 and Cys189. Residues 101 to 120 traverse the membrane as a helical segment; it reads IYFFLLFVELDNFLLTIMAY. At 121-139 the chain is on the cytoplasmic side; that stretch reads DRYVAICHPMHYTVIMNYK. Residues 140-158 traverse the membrane as a helical segment; sequence LCGFLVLVSWIVSVLHALF. The Extracellular segment spans residues 159 to 196; sequence QSLMMLALPFCTHLEIPHYFCEPNQVIQLTCSDAFLND. A helical membrane pass occupies residues 197-219; it reads LVIYFTLVLLATVPLAGIFYSYF. The Cytoplasmic portion of the chain corresponds to 220–236; the sequence is KIVSSICAISSVHGKYK. Residues 237–260 form a helical membrane-spanning segment; the sequence is AFSTCASHLSVVSLFYCTGLGVYL. At 261-272 the chain is on the extracellular side; sequence SSAANNSSQASA. The helical transmembrane segment at 273–292 threads the bilayer; sequence TASVMYTVVTPMVNPFIYSL. Over 293 to 333 the chain is Cytoplasmic; that stretch reads RNKDVKSVLKKTLCEEVIRSPPSLLHFFLVLCHLPCFIFCY.

The protein belongs to the G-protein coupled receptor 1 family. In terms of tissue distribution, olfactory epithelium.

The protein resides in the cell membrane. In terms of biological role, odorant receptor. This Rattus norvegicus (Rat) protein is Olfactory receptor 1078 (Olr1078).